The sequence spans 105 residues: Large ribosomal subunit protein bL21 (105 aa).

The protein belongs to the bacterial ribosomal protein bL21 family. Part of the 50S ribosomal subunit. Contacts protein L20.

Its function is as follows. This protein binds to 23S rRNA in the presence of protein L20. This chain is Large ribosomal subunit protein bL21, found in Rhizobium etli (strain ATCC 51251 / DSM 11541 / JCM 21823 / NBRC 15573 / CFN 42).